The chain runs to 363 residues: Protein-glutamate methylesterase/protein-glutamine glutaminase 3 (363 aa).

The region spanning 8–125 (KVLCVDDSAL…RDGMLDYAEK (118 aa)) is the Response regulatory domain. Asp59 carries the post-translational modification 4-aspartylphosphate. One can recognise a CheB-type methylesterase domain in the interval 164–356 (LVSTEKLIII…RRVMARLATM (193 aa)). Active-site residues include Ser176, His202, and Asp298.

Belongs to the CheB family. Post-translationally, phosphorylated by CheA. Phosphorylation of the N-terminal regulatory domain activates the methylesterase activity.

It is found in the cytoplasm. It carries out the reaction [protein]-L-glutamate 5-O-methyl ester + H2O = L-glutamyl-[protein] + methanol + H(+). The enzyme catalyses L-glutaminyl-[protein] + H2O = L-glutamyl-[protein] + NH4(+). In terms of biological role, involved in chemotaxis. Part of a chemotaxis signal transduction system that modulates chemotaxis in response to various stimuli. Catalyzes the demethylation of specific methylglutamate residues introduced into the chemoreceptors (methyl-accepting chemotaxis proteins or MCP) by CheR. Also mediates the irreversible deamidation of specific glutamine residues to glutamic acid. This chain is Protein-glutamate methylesterase/protein-glutamine glutaminase 3, found in Burkholderia lata (strain ATCC 17760 / DSM 23089 / LMG 22485 / NCIMB 9086 / R18194 / 383).